A 291-amino-acid polypeptide reads, in one-letter code: Acetyl-coenzyme A carboxylase carboxyl transferase subunit beta (291 aa).

Residues Met1–Ser23 are disordered. The CoA carboxyltransferase N-terminal domain maps to Leu28–Ala291. Residues Cys32, Cys35, Cys51, and Cys54 each coordinate Zn(2+). Residues Cys32–Cys54 form a C4-type zinc finger.

This sequence belongs to the AccD/PCCB family. Acetyl-CoA carboxylase is a heterohexamer composed of biotin carboxyl carrier protein (AccB), biotin carboxylase (AccC) and two subunits each of ACCase subunit alpha (AccA) and ACCase subunit beta (AccD). Requires Zn(2+) as cofactor.

It localises to the cytoplasm. The catalysed reaction is N(6)-carboxybiotinyl-L-lysyl-[protein] + acetyl-CoA = N(6)-biotinyl-L-lysyl-[protein] + malonyl-CoA. It participates in lipid metabolism; malonyl-CoA biosynthesis; malonyl-CoA from acetyl-CoA: step 1/1. In terms of biological role, component of the acetyl coenzyme A carboxylase (ACC) complex. Biotin carboxylase (BC) catalyzes the carboxylation of biotin on its carrier protein (BCCP) and then the CO(2) group is transferred by the transcarboxylase to acetyl-CoA to form malonyl-CoA. This chain is Acetyl-coenzyme A carboxylase carboxyl transferase subunit beta, found in Stenotrophomonas maltophilia (strain K279a).